Here is a 63-residue protein sequence, read N- to C-terminus: Large ribosomal subunit protein bL35 (63 aa).

Belongs to the bacterial ribosomal protein bL35 family.

This Sulfurovum sp. (strain NBC37-1) protein is Large ribosomal subunit protein bL35.